Consider the following 257-residue polypeptide: UPF0246 protein Sama_0917 (257 aa).

This sequence belongs to the UPF0246 family.

The polypeptide is UPF0246 protein Sama_0917 (Shewanella amazonensis (strain ATCC BAA-1098 / SB2B)).